Consider the following 920-residue polypeptide: Anillin-related medial ring protein mid1 (920 aa).

A disordered region spans residues 1–452 (MKEQEFSYRE…LSSEDLRHPS (452 aa)). 2 positions are modified to phosphoserine: Ser15 and Ser24. Thr34 carries the phosphothreonine modification. Residues Ser46 and Ser62 each carry the phosphoserine modification. A Nuclear export sequence (NES) 1 motif is present at residues 69–81 (LNVATDLLESLDL). Phosphoserine is present on Ser95. Polar residues predominate over residues 461–481 (RTYSNYCENEPNKSSQSLVSS). Phosphoserine is present on Ser531. A disordered region spans residues 538–561 (DLPSQDKSTSYEVPNGTENQSPRP). The span at 542 to 561 (QDKSTSYEVPNGTENQSPRP) shows a compositional bias: polar residues. Residues 551–920 (PNGTENQSPR…WLQEYVNFMA (370 aa)) are cryptic lipid-binding C2 domain. A Nuclear localization sequence (NLS) motif is present at residues 681 to 710 (RKFFDKLFNRRKKRKLNKAAAVENSKAKKS). The Nuclear export sequence (NES) 2 signature appears at 763 to 773 (LGNLTLTCLYI). Positions 802 to 901 (LYNEGYLYRL…WLQVMNSRSF (100 aa)) constitute a PH domain.

As to quaternary structure, homodimer. Interacts with blt1 and cdr2. Interacts with gef2. Interacts with plo1 and rng2. Interacts with fhk2 and sep1. Interacts with clp1. Post-translationally, phosphorylated. At the onset of mitosis, becomes hyperphosphorylated, leaves the nucleus, and forms a medial ring. Phosphorylation by plo1 and other kinases may contribute to solubilizing mid1 for export from the nucleus. Phosphorylation by sid2 drives removal from the cortex at the actomyosin contractile ring constriction onset.

It is found in the nucleus. Its subcellular location is the cytoplasm. It localises to the cell cortex. The protein localises to the cytoskeleton. In terms of biological role, scaffold protein that anchors the contractile ring (CR) at the cell equator during cytokinesis. At the onset of mitosis, membrane-bound oligomers of mid1 assemble recruitment platforms for cytokinetic ring components at the medial cortex and stabilize the ring position during its compaction. Recruits dephosphorylated myo2, but also rng2, clp1 and cdc15 to nodes and to place cytokinetic nodes around the cell equator the medial cortex to promote the ring assembly in cooperation with F-actin. Necessary to stabilize the mitotic spindle perpendicular to the axis of cell division. Also recruits the cdr2 kinase to the CR. In the nucleus, binds to the promoter regions of M-G1 transcribed genes to negatively regulate their expression. This chain is Anillin-related medial ring protein mid1, found in Schizosaccharomyces pombe (strain 972 / ATCC 24843) (Fission yeast).